The sequence spans 164 residues: ATP synthase subunit b (164 aa).

Residues 6-26 form a helical membrane-spanning segment; that stretch reads GELVGNFILVTGSVIVLLLLI.

Belongs to the ATPase B chain family. As to quaternary structure, F-type ATPases have 2 components, F(1) - the catalytic core - and F(0) - the membrane proton channel. F(1) has five subunits: alpha(3), beta(3), gamma(1), delta(1), epsilon(1). F(0) has three main subunits: a(1), b(2) and c(10-14). The alpha and beta chains form an alternating ring which encloses part of the gamma chain. F(1) is attached to F(0) by a central stalk formed by the gamma and epsilon chains, while a peripheral stalk is formed by the delta and b chains.

It is found in the cell membrane. In terms of biological role, f(1)F(0) ATP synthase produces ATP from ADP in the presence of a proton or sodium gradient. F-type ATPases consist of two structural domains, F(1) containing the extramembraneous catalytic core and F(0) containing the membrane proton channel, linked together by a central stalk and a peripheral stalk. During catalysis, ATP synthesis in the catalytic domain of F(1) is coupled via a rotary mechanism of the central stalk subunits to proton translocation. Functionally, component of the F(0) channel, it forms part of the peripheral stalk, linking F(1) to F(0). The polypeptide is ATP synthase subunit b (Streptococcus pyogenes serotype M1).